The primary structure comprises 325 residues: Treponemal membrane protein B (325 aa).

Positions 1-24 (MKTRNFSLVSALYVLLGVPLFVSA) are cleaved as a signal peptide. The EAARKAAE repeat unit spans residues 159–166 (EAARKAAE). Residues 167 to 189 (ARKLEEQRIAAQKAQEERKRAEE) form an ARKLEEQRIAAQKAQEERKRAEE repeat. The disordered stretch occupies residues 176 to 224 (AAQKAQEERKRAEEEAARKAAEARKLEEQRIAAQKAQEERKRAEEEAAR). An EAARKAAE repeat occupies 190-197 (EAARKAAE). Residues 198 to 220 (ARKLEEQRIAAQKAQEERKRAEE) form an ARKLEEQRIAAQKAQEERKRAEE repeat. One copy of the EAARKAAE repeat lies at 221–228 (EAARKAAE). The EAARKAEE repeat unit spans residues 229–236 (EAARKAEE).

This sequence to T.phagedenis TmpB.

Its subcellular location is the cell outer membrane. Its function is as follows. Tmp may serve as a porin or transport protein for large molecules. The protein is Treponemal membrane protein B (tmpB) of Treponema pallidum (strain Nichols).